The following is a 264-amino-acid chain: Probable glycerophosphodiester phosphodiesterase 2 (264 aa).

The region spanning 17–255 (RIAMAHRGFT…DRADLLRDVL (239 aa)) is the GP-PDE domain. The Proton acceptor role is filled by His22. A divalent metal cation is bound by residues Glu50, Asp52, and His65. His65 (proton donor) is an active-site residue.

Belongs to the glycerophosphoryl diester phosphodiesterase family. A divalent metal cation is required as a cofactor.

The enzyme catalyses a sn-glycero-3-phosphodiester + H2O = an alcohol + sn-glycerol 3-phosphate + H(+). Glycerophosphodiester phosphodiesterase hydrolyzes glycerophosphodiesters into glycerol-3-phosphate (G3P) and the corresponding alcohol. The sequence is that of Probable glycerophosphodiester phosphodiesterase 2 from Mycobacterium tuberculosis (strain ATCC 25618 / H37Rv).